The sequence spans 133 residues: Small ribosomal subunit protein bS6 (133 aa).

This sequence belongs to the bacterial ribosomal protein bS6 family.

In terms of biological role, binds together with bS18 to 16S ribosomal RNA. This chain is Small ribosomal subunit protein bS6, found in Borrelia turicatae (strain 91E135).